Consider the following 499-residue polypeptide: Proline--tRNA ligase (499 aa).

Residues 1-17 are compositionally biased toward basic and acidic residues; that stretch reads MTKDGGKKDNQGQDKKA. Residues 1–21 are disordered; sequence MTKDGGKKDNQGQDKKAQQYG.

It belongs to the class-II aminoacyl-tRNA synthetase family. ProS type 3 subfamily. Homodimer.

It is found in the cytoplasm. The enzyme catalyses tRNA(Pro) + L-proline + ATP = L-prolyl-tRNA(Pro) + AMP + diphosphate. Catalyzes the attachment of proline to tRNA(Pro) in a two-step reaction: proline is first activated by ATP to form Pro-AMP and then transferred to the acceptor end of tRNA(Pro). Can inadvertently accommodate and process cysteine. In Deinococcus radiodurans (strain ATCC 13939 / DSM 20539 / JCM 16871 / CCUG 27074 / LMG 4051 / NBRC 15346 / NCIMB 9279 / VKM B-1422 / R1), this protein is Proline--tRNA ligase (proS).